Consider the following 514-residue polypeptide: MTTTKRPIALLILDGWGYRENTHMNAVYHANTPVLDRLNAQYAHGLISGSGLDVGLPDGQMGNSEVGHINLGSGRIVYQELTRISKAIADHEFEQNPALCDAVDAAVKTGGAVHIMGLLSPGGVHSHEEHIEAMCRMAVARGATKVYLHAFLDGRDTPPRSAKSSLSHFDDLFTTLGHGRIASIIGRYFAMDRDNRWDRVSQAYDLITQGKSKFQYDNAVTALEAAYSRDENDEFVSSSAITDANGQVATLQDGDALIFMNFRADRARQITRSFINPEFDGFARAVTPKVNFVTLTEYAADIKAPIAYPSDNLVNTLGEVLQNRGRTQLRISETEKYAHVTFFFNGGKEEPFNGEDRILINSPKVATYDLQPEMSSTELTDKLVAAIESTKYDVIICNYPNGDMVGHTGNFDAAVKACEAVDACIGRVVEALAKVGGECIITADHGNAEQMTDETTGQAHTAHTSELVPFVFVGRDATIDKGGKLSDVAPTILHLMGESIPAEMTGKPLIHVKE.

Mn(2+) contacts are provided by D14 and S64. S64 acts as the Phosphoserine intermediate in catalysis. Residues H125, 155–156, R187, R193, 263–266, and K336 contribute to the substrate site; these read RD and RADR. Residues D403, H407, D444, H445, and H463 each contribute to the Mn(2+) site.

This sequence belongs to the BPG-independent phosphoglycerate mutase family. Monomer. Requires Mn(2+) as cofactor.

It carries out the reaction (2R)-2-phosphoglycerate = (2R)-3-phosphoglycerate. Its pathway is carbohydrate degradation; glycolysis; pyruvate from D-glyceraldehyde 3-phosphate: step 3/5. In terms of biological role, catalyzes the interconversion of 2-phosphoglycerate and 3-phosphoglycerate. This chain is 2,3-bisphosphoglycerate-independent phosphoglycerate mutase, found in Shewanella oneidensis (strain ATCC 700550 / JCM 31522 / CIP 106686 / LMG 19005 / NCIMB 14063 / MR-1).